The following is a 772-amino-acid chain: Tubulin monoglycylase TTLL3 (772 aa).

The tract at residues 50–81 is disordered; it reads PTLLPPQKDLDSSAMGDSDTTEDEDEDEDEEF. Positions 68–81 are enriched in acidic residues; it reads DTTEDEDEDEDEEF. The TTL domain maps to 151 to 510; that stretch reads ARNVLKLVVK…RMLDRNCDTG (360 aa). Residues K283, 289–290, 321–324, 334–336, and 378–379 contribute to the ATP site; these read RG, QKYI, KFD, and CN. An a protein-binding site is contributed by R289. S381 serves as a coordination point for L-glutamate. Mg(2+) contacts are provided by D456, E469, and N471. Position 469 (E469) interacts with ATP.

The cofactor is Mg(2+). Expressed in brain, heart, kidney, testis, liver, lung, muscle, spleen, trachea and colon.

It is found in the cytoplasm. The protein resides in the cytoskeleton. It localises to the cell projection. Its subcellular location is the cilium. The protein localises to the cilium axoneme. It is found in the flagellum axoneme. The enzyme catalyses L-glutamyl-[protein] + glycine + ATP = glycyl-L-glutamyl-[protein] + ADP + phosphate + H(+). In terms of biological role, monoglycylase which modifies alpha- and beta-tubulin, adding a single glycine on the gamma-carboxyl groups of specific glutamate residues to generate monoglycine side chains within the C-terminal tail of tubulin. Not involved in elongation step of the polyglycylation reaction. Preferentially glycylates a beta-tail peptide over the alpha-tail, although shifts its preference toward alpha-tail as beta-tail glutamylation increases. Competes with polyglutamylases for modification site on beta-tubulin substrate, thereby creating an anticorrelation between glycylation and glutamylation reactions. Together with TTLL8, mediates microtubule glycylation of primary and motile cilia, which is essential for their stability and maintenance. Involved in microtubule glycylation of primary cilia in colon which controls cell proliferation of epithelial cells and plays an essential role in colon cancer development. Together with TTLL8, glycylates sperm flagella which regulates axonemal dynein motor activity, thereby controlling flagellar beat, directional sperm swimming and male fertility. This chain is Tubulin monoglycylase TTLL3, found in Homo sapiens (Human).